The primary structure comprises 81 residues: ATP synthase subunit c, chloroplastic (81 aa).

2 consecutive transmembrane segments (helical) span residues 3-23 (PLIA…ASIG) and 57-77 (LAFM…LLFA).

It belongs to the ATPase C chain family. As to quaternary structure, F-type ATPases have 2 components, F(1) - the catalytic core - and F(0) - the membrane proton channel. F(1) has five subunits: alpha(3), beta(3), gamma(1), delta(1), epsilon(1). F(0) has four main subunits: a(1), b(1), b'(1) and c(10-14). The alpha and beta chains form an alternating ring which encloses part of the gamma chain. F(1) is attached to F(0) by a central stalk formed by the gamma and epsilon chains, while a peripheral stalk is formed by the delta, b and b' chains.

Its subcellular location is the plastid. The protein resides in the chloroplast thylakoid membrane. Its function is as follows. F(1)F(0) ATP synthase produces ATP from ADP in the presence of a proton or sodium gradient. F-type ATPases consist of two structural domains, F(1) containing the extramembraneous catalytic core and F(0) containing the membrane proton channel, linked together by a central stalk and a peripheral stalk. During catalysis, ATP synthesis in the catalytic domain of F(1) is coupled via a rotary mechanism of the central stalk subunits to proton translocation. Functionally, key component of the F(0) channel; it plays a direct role in translocation across the membrane. A homomeric c-ring of between 10-14 subunits forms the central stalk rotor element with the F(1) delta and epsilon subunits. This chain is ATP synthase subunit c, chloroplastic, found in Pisum sativum (Garden pea).